A 759-amino-acid chain; its full sequence is DNA replication licensing factor mcm-5 (759 aa).

Residues 330-536 (AYELIAKSIA…KDATLAKHVI (207 aa)) enclose the MCM domain. ADP is bound at residue arginine 370. Positions 511–514 (SRFD) match the Arginine finger motif.

Belongs to the MCM family. As to quaternary structure, component of the mcm2-7 complex. The complex forms a toroidal hexameric ring with the proposed subunit order mcm2-mcm6-mcm4-mcm7-mcm3-mcm5 (By simililarity).

Its subcellular location is the nucleus. It is found in the cytoplasm. It localises to the cytosol. The enzyme catalyses ATP + H2O = ADP + phosphate + H(+). Acts as a component of the MCM2-7 complex (MCM complex) which is the replicative helicase essential for 'once per cell cycle' DNA replication initiation and elongation in eukaryotic cells. Core component of CDC45-MCM-GINS (CMG) helicase, the molecular machine that unwinds template DNA during replication, and around which the replisome is built. The active ATPase sites in the MCM2-7 ring are formed through the interaction surfaces of two neighboring subunits such that a critical structure of a conserved arginine finger motif is provided in trans relative to the ATP-binding site of the Walker A box of the adjacent subunit. The six ATPase active sites, however, are likely to contribute differentially to the complex helicase activity. The protein is DNA replication licensing factor mcm-5 (mcm-5) of Caenorhabditis elegans.